Here is a 244-residue protein sequence, read N- to C-terminus: Phosphoadenosine 5'-phosphosulfate reductase (244 aa).

The active-site Nucleophile; cysteine thiosulfonate intermediate is the cysteine 239.

The protein belongs to the PAPS reductase family. CysH subfamily.

The protein resides in the cytoplasm. It carries out the reaction [thioredoxin]-disulfide + sulfite + adenosine 3',5'-bisphosphate + 2 H(+) = [thioredoxin]-dithiol + 3'-phosphoadenylyl sulfate. The protein operates within sulfur metabolism; hydrogen sulfide biosynthesis; sulfite from sulfate: step 3/3. Functionally, catalyzes the formation of sulfite from phosphoadenosine 5'-phosphosulfate (PAPS) using thioredoxin as an electron donor. The sequence is that of Phosphoadenosine 5'-phosphosulfate reductase from Shigella boydii serotype 4 (strain Sb227).